Here is a 198-residue protein sequence, read N- to C-terminus: Holliday junction resolvase RecU (198 aa).

Residues 1 to 22 (MVNYPHKVSSQKRQTSLSQPKN) form a disordered region. Polar residues predominate over residues 11-22 (QKRQTSLSQPKN). Mg(2+) is bound by residues T81, D83, E96, and Q115.

It belongs to the RecU family. It depends on Mg(2+) as a cofactor.

Its subcellular location is the cytoplasm. The catalysed reaction is Endonucleolytic cleavage at a junction such as a reciprocal single-stranded crossover between two homologous DNA duplexes (Holliday junction).. Endonuclease that resolves Holliday junction intermediates in genetic recombination. Cleaves mobile four-strand junctions by introducing symmetrical nicks in paired strands. Promotes annealing of linear ssDNA with homologous dsDNA. Required for DNA repair, homologous recombination and chromosome segregation. This Streptococcus pneumoniae (strain P1031) protein is Holliday junction resolvase RecU.